The primary structure comprises 426 residues: Phosphomethylpyrimidine synthase (426 aa).

Residues Asn65, Met94, Tyr123, His162, 184-186 (SRG), 225-228 (DGMR), and Glu264 each bind substrate. Residue His268 participates in Zn(2+) binding. Substrate is bound at residue Tyr291. His332 contributes to the Zn(2+) binding site. Residues Cys408, Cys411, and Cys415 each contribute to the [4Fe-4S] cluster site.

This sequence belongs to the ThiC family. [4Fe-4S] cluster serves as cofactor.

It carries out the reaction 5-amino-1-(5-phospho-beta-D-ribosyl)imidazole + S-adenosyl-L-methionine = 4-amino-2-methyl-5-(phosphooxymethyl)pyrimidine + CO + 5'-deoxyadenosine + formate + L-methionine + 3 H(+). The protein operates within cofactor biosynthesis; thiamine diphosphate biosynthesis. Functionally, catalyzes the synthesis of the hydroxymethylpyrimidine phosphate (HMP-P) moiety of thiamine from aminoimidazole ribotide (AIR) in a radical S-adenosyl-L-methionine (SAM)-dependent reaction. This Methanococcus vannielii (strain ATCC 35089 / DSM 1224 / JCM 13029 / OCM 148 / SB) protein is Phosphomethylpyrimidine synthase.